The following is a 122-amino-acid chain: Large ribosomal subunit protein uL14 (122 aa).

The protein belongs to the universal ribosomal protein uL14 family. As to quaternary structure, part of the 50S ribosomal subunit. Forms a cluster with proteins L3 and L19. In the 70S ribosome, L14 and L19 interact and together make contacts with the 16S rRNA in bridges B5 and B8.

In terms of biological role, binds to 23S rRNA. Forms part of two intersubunit bridges in the 70S ribosome. The polypeptide is Large ribosomal subunit protein uL14 (Lactobacillus gasseri (strain ATCC 33323 / DSM 20243 / BCRC 14619 / CIP 102991 / JCM 1131 / KCTC 3163 / NCIMB 11718 / NCTC 13722 / AM63)).